A 346-amino-acid polypeptide reads, in one-letter code: Biotin synthase (346 aa).

The region spanning asparagine 40–serine 264 is the Radical SAM core domain. Residues cysteine 55, cysteine 59, and cysteine 62 each contribute to the [4Fe-4S] cluster site. 4 residues coordinate [2Fe-2S] cluster: cysteine 99, cysteine 130, cysteine 190, and arginine 262.

The protein belongs to the radical SAM superfamily. Biotin synthase family. In terms of assembly, homodimer. It depends on [4Fe-4S] cluster as a cofactor. The cofactor is [2Fe-2S] cluster.

It catalyses the reaction (4R,5S)-dethiobiotin + (sulfur carrier)-SH + 2 reduced [2Fe-2S]-[ferredoxin] + 2 S-adenosyl-L-methionine = (sulfur carrier)-H + biotin + 2 5'-deoxyadenosine + 2 L-methionine + 2 oxidized [2Fe-2S]-[ferredoxin]. It functions in the pathway cofactor biosynthesis; biotin biosynthesis; biotin from 7,8-diaminononanoate: step 2/2. Functionally, catalyzes the conversion of dethiobiotin (DTB) to biotin by the insertion of a sulfur atom into dethiobiotin via a radical-based mechanism. This is Biotin synthase from Colwellia psychrerythraea (strain 34H / ATCC BAA-681) (Vibrio psychroerythus).